We begin with the raw amino-acid sequence, 131 residues long: Translation initiation factor 5A (131 aa).

Residue K36 is modified to Hypusine.

The protein belongs to the eIF-5A family.

Its subcellular location is the cytoplasm. Its function is as follows. Functions by promoting the formation of the first peptide bond. This chain is Translation initiation factor 5A, found in Sulfurisphaera tokodaii (strain DSM 16993 / JCM 10545 / NBRC 100140 / 7) (Sulfolobus tokodaii).